A 4723-amino-acid polypeptide reads, in one-letter code: MSRQHQRHHQQHHHLPPHQQPQQQMPQQQQQLTAQQQQQQQLLMAEHAAAAEAAELFDLLCVATTMRQILALHRAMCEAVGLRPSPLNDFYPRLKAKVRSWKAQALWKKFDARAAHRVYGKGAACTGTRVLVIGAGPCGLRTAIEAQLLGAKVVVLEKRDRITRNNVLHLWPFVITDLRNLGAKKFYGKFCAGSIDHISIRQLQCMLLKVALLLGVEIHEGVSFDHAVEPSGDGGGWRAAVTPADHPVSHYEFDVLIGADGKRNMLDFRRKEFRGKLAIAITANFINKKTEAEAKVEEISGVAFIFNQAFFKELYGKTGIDLENIVYYKDETHYFVMTAKKHSLIDKGVIIEDMADPGELLAPANVDTQKLHDYAREAAEFSTQYQMPNLEFAVNHYGKPDVAMFDFTSMFAAEMSCRVIVRKGARLMQCLVGDSLLEPFWPTGSGCARGFLSSMDAAYAIKLWSNPQNSTLGVLAQRESIYRLLNQTTPDTLQRDISAYTVDPATRYPNLNRESVNSWQVKHLVDTDDPSILEQTFMDTHALQTPHLDTPGRRKRRSGDLLPQGATLLRWISAQLHSYQFIPELKEASDVFRNGRVLCALINRYRPDLIDYAATKDMSPVECNELSFAVLERELHIDRVMSAKQSLDLTELESRIWLNYLDQICDLFRGEIPHIKHPKMDFSDLRQKYRINHTHAQPDFSKLLATKPKAKSPMQDAVDIPTTVQRRSVLEEERAKRQRRHEQLLNIGGGAAGAAAGVAGSGTGTTTQGQNDTPRRSKKRRQVDKTANIEERQQRLQEIEENRQERMSKRRQQRYHQTQNFYKSLQLLQAGKLLREGGEAGVAEDGTPFEDYSIFLYRQQAPVFNDRVKDLERKLLFPDRERGDIPSALPRTADEQFSDRIKNMEQRMTGRGGLGGDKKPKDLMRAIGKIDSNDWNVREIEKKIELSKKTEIHGPKGREKVPKWSKEQFQARQHKMSKPQRQDSREAEKFKDIDQTIRNLDKQLKEGHNLDVGERGRNKVASIAGQFGKKDEANSDEKNAGSSNATTNTNNTVIPKSSSKVALAFKKQAASEKCRFCKQTVYLMEKTTVEGLVLHRNCLKCHHCHTNLRLGGYAFDRDDPQGRFYCTQHFRLPPKPLPQRTNKARKSAAAQPASPAVPPTAGSVPTAAATSEHMDTTPPRDQVDLLETSRANASADAMSDDEANVIDEHEWSGRNFLPESNNDSQSELSSSDESDTESDSEMFEEADDSPFGAQTLQLASDWIGKQYCEDSDDSDDFYDSSEGIADDGKDDTEGEEFKKARELRRQEVRLQPLPANLPTDTETEKLKLNVDNKENMADRSSLKSGNSFESARSQPSTPLSTPTRVEMEQLERNAPRKFSSEIEAISEKLYHMNNMVKMNKDLEVLAKENLVKSDILRKLTLKEKWLAENAAIAAGQKVTPTPSATAPGLQPKSKFDEKFEKVVSPPQPVVEPKPKPVIDFNLDELKPRKPNFEERPKEQLPRPESLKKPPQQKPKGSSTNVSRSNSLKSNASNGSPKVKKAPISNNSKMQIEGILGTLRKIQSQNSSDQDEDMDVDEDVERKPNKELNSKLKEIQASSFAGTMDHIKSQLTMPTVSAQAPPSMDLSKYFPNQKQEKSSTSSTNKNQVTLKDVNLAKYFPSSPAPQRRTVETVADRLKKSQTEAALAKTKLLEDQANNQAEKTKKEVEKEGESKKITKKVADSKAVPPKRQASLDTFSLREHQMDGALDLTKKKGPTKASAGVKKPAKSGSTTSVTKATATSKGKTIKIVKKIVPKGTKAKKAAEAAQESAVVEAPPEKKPPKDEAERILDEILGDGEYRSPSSEYQRLFQDEKSPSDLSDNIDRILEESGLDVELGLPKRSSKKLVKTKSLGEGDFDMKPSKERLTGVQNILKRFESMSSVTSQNSDEQAAFKLRRMESTTSNLSSLTRSRESLVSVSDSMSDLEKTMDYLRNEWRNEATNFLQKKRDKFYAKKEEQEKESKILAKPDPLDNLPVQYRDSKLAKFFGLAASKSPENRKSPIKKKKSPSKTPKVTKANNSLEELAKISNVRQTKKAQPKTLKPVEVKPLKPASPVPDDFEILDLLEKATEAKELERSKTKSPAVESISQTPKEAIVEISLPVEDIKNLPKTGCDKSSNSSRRGSQSSLIMSRRHSEISLNEKLNQDALAALNQIEKEREAEQVDELFQSMVEEMEQEPQPTAIVEPPEEDIDADSLCTTISKSPSAQPVTVVKRGSSEDQSIEKLFSHFSDEMLVNVEFDSNDELVGITPRATLVSRNTEDRDYLDKLESLERDEETFQPVVGEKFIQENVQDEVDGLHFPSRPQRRPKSSSSSSEPSLPVAPQRLKKKLSKLDPEDMPPSVQDLLQQVYQKNIQPELVEVIPVEGKQTLRFPSMLAEEDVDEVDHSKEGIKKIETAPEEVRKVTEPEDVARVIPSPIKPSISQSNSLKSENSSGSSLVEIPKIITPPKSSSKENSSDWDMEKLPASPMPRRRLLPNQTPYKAPSVASKESSLEWDMEKLPNSPMLPRRNKMRAISPSTNPVQLLNNLPSDVDDEAAQRRLIEDFEQERRQALIKRDENFEAIAAEQRRRDSLQSSSNSSSKRSLPPPTPPMMASRRGTTQDTNRTQDTASRHEGTPPMFKKLDVDGSGTSMDSTSCSTRRSSFAFIELQDNKPVIVPMPKKLKLPKPEPPRFVPEPVATDEPVPEVFQGRAWPKTQLEGEVDLGDSDNEDETEKLKKQLPEYARSDSPPSAAFKNRKWPDGKTVFDKRAESLEEEDIFEGLLSPRKRGSQRFMDKPRSQSPQPFKPLANSSRKSSKSFSDLKKGPSLQSLSAQSSQDTDTLSTTTTVATARPASYANYEDPMDASTQALLDRSKRLHNRKRDFVNERVVERNPYMRDVLRSTDRRDYDDVDEDLTSYRPRHYASSTLNRFPNTTIRKSNNYDYLSPSSDYLSRRSYIPSASATSSYYPSTTRSSHLSDLFRRRSPASGTVSALSGYGNKESCIGLALDRVGHLIESKCTWVRSTKVQTESESTSPDEVELNSATEISTDSEFDNDEIIRQAPKIFIDDTHLRKPTKVQIKSTMIGPNAASAGLHQKQLAAREKGGSYLQKYQPQPPLPQFKPLVQVDPTLLIGSQRAPLQNPRPGDYLLNKTASTEGIASKKSLELKKRYLLGEPANGNKIQKSGSTSVLDSRIRSFQSNISECQKLLNPSSDISAGMRTFLDRTKLGEGSQTTPGQTNELIRSATSNVINDLRVELRIQKTGSSHSTDNEKENVFVNCKNELNKGMEYTDAVNATLLDQLARKSSPTTPTNKTVVEVIDLVTPEKPIDIIDLTALETPKKQLVDGSAMDVDERLTPDSNKISELQQEVKEEPKPDVSRDVKECIPDILGHIKEGTGSKEPGGEDQQSLLEQSDEEKRDSPEKDVAEHELYEPDSVQIQVPNIPWEKSKPEVMSTTGSSGSICSSSDSSSIEDIQHYILESTTSPDTQTVGGKHNVPRLEVHDTSGALMQVDSLMIVNGKYIGDPEDVKFLDMPANVIVPPAPALKTNELDMEDDQEAEAEPVTATPEPVECTVIEAERRVTAPPPLPEMGPPKLKFDSKNENKIESLKNLPLIVESNVEHSQAVKPITLNLSNLARTPDTPTTPTAHDSDKTPTGEILSRGSDSETEHTGTGQVLTETELSDWTADDCISENFVDLEFALNSNKGTIKRRKDRRRSGASKLPSGNEVIHELARQAPVVQMDGILSAIDIDDIEFMDTGSEGSCAEAYSATNTALIQNRGYMEYIEAEPKKTTRKAAPPSSYPGNLPPLMTKRDEKLGVDYIEQGAYIMHDDAKTPVNEVAPAMTQSLTDSITLNELDDDSMIISQTQPTTTEESEALTVVTSPLDTSSPRVLDQFASMLAAGKGDSTPSSSEQQPKTSTVTSSSTGPNSSTTGNVSKEPQEEDLQIQFEYVRALQQRISQISTQRRKSSKGEAPNLQLNSSAPVIESAEDPAKPAEEPLVSMRPRTTSISGKVPEIPTLSSKLEEITKERTKQKDLIHDLVMDKLQSKKQLNAEKRLHRSRQRSLLTSGYASGSSLSPTPKLAAACSPQDSNCSSQAHYHASTAEEAPKPPAERPLQKSATSTYVSPYRTVQAPTRSADLYKPRPFSEHIDSNALAGYKLGKTASFNGGKLGDFAKPIAPARVNRGGGVATADIANISASTENLRSEARARARLKSNTELGLSPEEKMQLIRSRLHYDQNRSLKPKQLEEMPSGDLAARARKMSASKSVNDLAYMVGQQQQQQVEKDAVLQAKAADFTSDPNLASGGQEKAGKTKSGRRPKDPERRKSLIQSLSSFFQKGSGSAASSSKEQGGAVAAVHSEQSERPGTSSSGTPTISDAAGGGGGGGGVFSRFRISPKSKEKSKSCFDLRNFGFGDKDMLVCNAASPAGATSASQKNHSQEYLNTTNNSRYRKQTNTAKPKPESFSSSSPQLYIHKPHHLAAAHPSALDDQTPPPIPPLPLNYQRSDDESYANETREHKKQRAISKASRQAELKRLRIAQEIQREQEEIEVQLKDLEARGVLIEKALRGEAQNIENLDATKDNDEKLLKELLEIWRNITALKKRDEELTIRQQELQLEYRHAQLKEELNLRLSCNKLDKSSADVAAEGAILNEMLEIVAKRAALRPTASQLDLTAAGSASTSAEATGIKLTGQPHDHEESII.

Residues 1 to 16 (MSRQHQRHHQQHHHLP) are compositionally biased toward basic residues. Residues 1–36 (MSRQHQRHHQQHHHLPPHQQPQQQMPQQQQQLTAQQ) are disordered. Residues 1–520 (MSRQHQRHHQ…LNRESVNSWQ (520 aa)) are monooxygenase domain. Low complexity predominate over residues 20 to 36 (QPQQQMPQQQQQLTAQQ). Residues Cys-138, 157–159 (EKR), 164–166 (RNN), Phe-224, Tyr-334, and Asp-434 contribute to the FAD site. The region spanning 562 to 669 (LPQGATLLRW…YLDQICDLFR (108 aa)) is the Calponin-homology (CH) domain. Disordered stretches follow at residues 746–795 (NIGG…RQQR), 948–993 (KKTE…FKDI), and 1026–1053 (QFGKKDEANSDEKNAGSSNATTNTNNTV). A compositionally biased stretch (low complexity) spans 753-769 (GAAAGVAGSGTGTTTQG). 4 stretches are compositionally biased toward basic and acidic residues: residues 783–795 (VDKTANIEERQQR), 948–966 (KKTEIHGPKGREKVPKWSK), 980–993 (QRQDSREAEKFKDI), and 1028–1039 (GKKDEANSDEKN). Phosphothreonine is present on Thr-1049. The LIM zinc-binding domain maps to 1072 to 1136 (EKCRFCKQTV…TQHFRLPPKP (65 aa)). 8 residues coordinate Zn(2+): Cys-1074, Cys-1077, His-1095, Cys-1098, Cys-1101, Cys-1104, Cys-1126, and His-1129. Residues 1130–1182 (FRLPPKPLPQRTNKARKSAAAQPASPAVPPTAGSVPTAAATSEHMDTTPPRDQ) are disordered. Residues Ser-1194, Ser-1199, and Ser-1212 each carry the phosphoserine modification. 5 disordered regions span residues 1212–1378 (SGRN…PRKF), 1434–1591 (AGQK…NSKL), 1614–1648 (TVSAQAPPSMDLSKYFPNQKQEKSSTSSTNKNQVT), 1684–1781 (ALAK…TATS), and 1797–1825 (TKAKKAAEAAQESAVVEAPPEKKPPKDEA). Residues 1219 to 1229 (ESNNDSQSELS) are compositionally biased toward low complexity. 2 stretches are compositionally biased toward acidic residues: residues 1230-1248 (SSDESDTESDSEMFEEADD) and 1269-1294 (EDSDDSDDFYDSSEGIADDGKDDTEG). Composition is skewed to basic and acidic residues over residues 1295 to 1308 (EEFKKARELRRQEV) and 1322 to 1341 (ETEKLKLNVDNKENMADRSS). One copy of the LRR 1 repeat lies at 1297 to 1320 (FKKARELRRQEVRLQPLPANLPTD). A compositionally biased stretch (polar residues) spans 1342 to 1363 (LKSGNSFESARSQPSTPLSTPT). 2 stretches are compositionally biased toward basic and acidic residues: residues 1365 to 1378 (VEMEQLERNAPRKF) and 1483 to 1507 (DELKPRKPNFEERPKEQLPRPESLK). The segment covering 1516 to 1535 (GSSTNVSRSNSLKSNASNGS) has biased composition (polar residues). Residues 1568 to 1578 (DQDEDMDVDED) are compositionally biased toward acidic residues. Residues 1579–1591 (VERKPNKELNSKL) show a composition bias toward basic and acidic residues. An LRR 2 repeat occupies 1579 to 1601 (VERKPNKELNSKLKEIQASSFAG). Polar residues predominate over residues 1629–1648 (FPNQKQEKSSTSSTNKNQVT). The segment covering 1700 to 1721 (EKTKKEVEKEGESKKITKKVAD) has biased composition (basic and acidic residues). Residues 1730-1754 (QASLDTFSLREHQMDGALDLTKKKG) form an LRR 3 repeat. Composition is skewed to low complexity over residues 1767–1781 (KSGSTTSVTKATATS) and 1804–1814 (EAAQESAVVEA). The span at 1815 to 1825 (PPEKKPPKDEA) shows a compositional bias: basic and acidic residues. Residues 1931–1956 (AFKLRRMESTTSNLSSLTRSRESLVS) form an LRR 4 repeat. Positions 1992–2009 (AKKEEQEKESKILAKPDP) are enriched in basic and acidic residues. Disordered stretches follow at residues 1992 to 2013 (AKKEEQEKESKILAKPDPLDNL), 2028 to 2092 (LAAS…KPAS), 2145 to 2172 (KNLPKTGCDKSSNSSRRGSQSSLIMSRR), 2329 to 2379 (NVQD…DMPP), 2418 to 2549 (EDVD…PRRN), 2604 to 2676 (AEQR…STSC), and 2699 to 2866 (PKKL…TTTT). Low complexity-rich tracts occupy residues 2155–2169 (SSNSSRRGSQSSLIM) and 2349–2358 (SSSSSSEPSL). Residues 2423–2450 (VDHSKEGIKKIETAPEEVRKVTEPEDVA) show a composition bias toward basic and acidic residues. Residues 2453–2476 (IPSPIKPSISQSNSLKSENSSGSS) are compositionally biased toward low complexity. The span at 2490–2502 (SSKENSSDWDMEK) shows a compositional bias: basic and acidic residues. One copy of the LRR 5 repeat lies at 2548 to 2574 (RNKMRAISPSTNPVQLLNNLPSDVDDE). Positions 2612–2623 (LQSSSNSSSKRS) are enriched in low complexity. Positions 2636–2648 (RGTTQDTNRTQDT) are enriched in polar residues. Residues 2649–2664 (ASRHEGTPPMFKKLDV) are compositionally biased toward basic and acidic residues. The segment covering 2667–2676 (SGTSMDSTSC) has biased composition (polar residues). Residues 2680 to 2704 (RSSFAFIELQDNKPVIVPMPKKLKL) form an LRR 6 repeat. Residues 2739-2752 (GEVDLGDSDNEDET) are compositionally biased toward acidic residues. Over residues 2777–2791 (KWPDGKTVFDKRAES) the composition is skewed to basic and acidic residues. The segment covering 2846–2866 (SLQSLSAQSSQDTDTLSTTTT) has biased composition (low complexity). An LRR 7 repeat occupies 2934–2957 (LTSYRPRHYASSTLNRFPNTTIRK). 2 disordered regions span residues 3411-3456 (HIKE…PDSV) and 3468-3488 (SKPEVMSTTGSSGSICSSSDS). Positions 3435-3451 (EEKRDSPEKDVAEHELY) are enriched in basic and acidic residues. The span at 3474–3488 (STTGSSGSICSSSDS) shows a compositional bias: low complexity. LRR repeat units lie at residues 3545–3568 (PEDVKFLDMPANVIVPPAPALKTN) and 3642–3665 (SQAVKPITLNLSNLARTPDTPTTP). Disordered stretches follow at residues 3655–3694 (LARTPDTPTTPTAHDSDKTPTGEILSRGSDSETEHTGTGQ), 3809–3830 (PKKTTRKAAPPSSYPGNLPPLM), 3888–3909 (QPTTTEESEALTVVTSPLDTSS), 3922–3962 (AGKG…EPQE), 3983–4037 (STQR…VPEI), 4072–4150 (LNAE…SPYR), 4260–4284 (QNRSLKPKQLEEMPSGDLAARARKM), and 4317–4347 (DFTSDPNLASGGQEKAGKTKSGRRPKDPERR). 2 stretches are compositionally biased toward polar residues: residues 3900 to 3909 (VVTSPLDTSS) and 3927 to 3937 (STPSSSEQQPK). Residues 3938 to 3957 (TSTVTSSSTGPNSSTTGNVS) are compositionally biased toward low complexity. Composition is skewed to polar residues over residues 4084 to 4099 (RSLLTSGYASGSSLSP) and 4109 to 4118 (PQDSNCSSQA). Basic and acidic residues-rich tracts occupy residues 4127 to 4137 (EAPKPPAERPL) and 4260 to 4270 (QNRSLKPKQLE). Residues Ser-4349 and Ser-4353 each carry the phosphoserine modification. 2 stretches are compositionally biased toward low complexity: residues 4360–4374 (KGSGSAASSSKEQGG) and 4387–4396 (PGTSSSGTPT). The segment at 4360–4414 (KGSGSAASSSKEQGGAVAAVHSEQSERPGTSSSGTPTISDAAGGGGGGGGVFSRF) is disordered. The span at 4401–4410 (AGGGGGGGGV) shows a compositional bias: gly residues. Ser-4426 is subject to Phosphoserine. Disordered stretches follow at residues 4449-4492 (AGAT…SSPQ) and 4505-4544 (HPSALDDQTPPPIPPLPLNYQRSDDESYANETREHKKQRA). A compositionally biased stretch (polar residues) spans 4450 to 4479 (GATSASQKNHSQEYLNTTNNSRYRKQTNTA). Positions 4550-4705 (RQAELKRLRI…AAGSASTSAE (156 aa)) constitute a bMERB domain. Residues 4646 to 4668 (KEELNLRLSCNKLDKSSADVAAE) form an LRR 10 repeat. The segment at 4704–4723 (AEATGIKLTGQPHDHEESII) is disordered.

It belongs to the Mical family. Interacts with plexA. The cofactor is FAD. As to expression, present in neuronal cell bodies, along axons, and in growth cones. Appears in the nervous system at stage 13 and labels motor and CNS projections, and at later embryonic stages, it is present on axons that make up all motor axon pathways: the intersegmental nerve (ISN), the intersegmental nerves b and d (ISNb and ISNd), and the segmental nerves a and c (SNa and SNc). Also present in segment boundaries at the position of muscle attachment sites and at low levels in the lateral cluster of chordotonal organs (at protein level). Localizes to growing bristle tips in close proximity to the bristle cell membrane and at sites of bristle branching and actin localization. Localizes to growth cones.

The protein resides in the cytoplasm. The enzyme catalyses L-methionyl-[F-actin] + NADPH + O2 + H(+) = L-methionyl-(R)-S-oxide-[F-actin] + NADP(+) + H2O. Its function is as follows. Monooxygenase that promotes depolymerization of F-actin by mediating oxidation of specific methionine residues on actin. Acts by modifying actin subunits at 'Met-44' and 'Met-47' through the addition of oxygen to form methionine-sulfoxide, leading to promote actin filament disassembly and prevent repolymerization. Plays a key role in semaphorin-plexin repulsive axon guidance and cell morphological changes, probably via its ability to modify and regulate actin. The polypeptide is [F-actin]-monooxygenase Mical (Mical) (Drosophila melanogaster (Fruit fly)).